A 237-amino-acid polypeptide reads, in one-letter code: Uridylate kinase (237 aa).

ATP is bound at residue 11-14 (KLSG). The segment at 18–23 (GGGGIG) is involved in allosteric activation by GTP. Residue G52 participates in UMP binding. The ATP site is built by G53 and R57. Residues D72 and 133-140 (SGMPYFST) contribute to the UMP site. Residues Q161, Y167, and D170 each coordinate ATP.

It belongs to the UMP kinase family. Homohexamer.

The protein localises to the cytoplasm. It carries out the reaction UMP + ATP = UDP + ADP. Its pathway is pyrimidine metabolism; CTP biosynthesis via de novo pathway; UDP from UMP (UMPK route): step 1/1. With respect to regulation, allosterically activated by GTP. Inhibited by UTP. Its function is as follows. Catalyzes the reversible phosphorylation of UMP to UDP. The protein is Uridylate kinase of Cutibacterium acnes (strain DSM 16379 / KPA171202) (Propionibacterium acnes).